Consider the following 222-residue polypeptide: Protein GrpE (222 aa).

The protein belongs to the GrpE family. In terms of assembly, homodimer.

It localises to the cytoplasm. In terms of biological role, participates actively in the response to hyperosmotic and heat shock by preventing the aggregation of stress-denatured proteins, in association with DnaK and GrpE. It is the nucleotide exchange factor for DnaK and may function as a thermosensor. Unfolded proteins bind initially to DnaJ; upon interaction with the DnaJ-bound protein, DnaK hydrolyzes its bound ATP, resulting in the formation of a stable complex. GrpE releases ADP from DnaK; ATP binding to DnaK triggers the release of the substrate protein, thus completing the reaction cycle. Several rounds of ATP-dependent interactions between DnaJ, DnaK and GrpE are required for fully efficient folding. This is Protein GrpE from Bartonella bacilliformis (strain ATCC 35685 / KC583 / Herrer 020/F12,63).